The primary structure comprises 316 residues: Acetyl-coenzyme A carboxylase carboxyl transferase subunit alpha (316 aa).

In terms of domain architecture, CoA carboxyltransferase C-terminal spans 36-290 (PLRTQLETLR…GSVISRHLDD (255 aa)).

It belongs to the AccA family. In terms of assembly, acetyl-CoA carboxylase is a heterohexamer composed of biotin carboxyl carrier protein (AccB), biotin carboxylase (AccC) and two subunits each of ACCase subunit alpha (AccA) and ACCase subunit beta (AccD).

The protein localises to the cytoplasm. It catalyses the reaction N(6)-carboxybiotinyl-L-lysyl-[protein] + acetyl-CoA = N(6)-biotinyl-L-lysyl-[protein] + malonyl-CoA. The protein operates within lipid metabolism; malonyl-CoA biosynthesis; malonyl-CoA from acetyl-CoA: step 1/1. Functionally, component of the acetyl coenzyme A carboxylase (ACC) complex. First, biotin carboxylase catalyzes the carboxylation of biotin on its carrier protein (BCCP) and then the CO(2) group is transferred by the carboxyltransferase to acetyl-CoA to form malonyl-CoA. The chain is Acetyl-coenzyme A carboxylase carboxyl transferase subunit alpha from Deinococcus radiodurans (strain ATCC 13939 / DSM 20539 / JCM 16871 / CCUG 27074 / LMG 4051 / NBRC 15346 / NCIMB 9279 / VKM B-1422 / R1).